The sequence spans 108 residues: Ig kappa chain V region GOM (108 aa).

The tract at residues 1–23 is framework-1; that stretch reads DIVMTQTPLSLSVSPGEPASISC. A disulfide bridge links Cys-23 with Cys-88. The segment at 24–34 is complementarity-determining-1; that stretch reads RSSQSNLDYLN. The segment at 35–49 is framework-2; the sequence is WYLQKAGQSPRLLPE. The interval 44–66 is disordered; it reads PRLLPEQDSQRASGVPDRFSGSG. The complementarity-determining-2 stretch occupies residues 50-56; the sequence is QDSQRAS. The segment at 57-88 is framework-3; it reads GVPDRFSGSGSGTDFTLRIGRVEAEDAGIYYC. The interval 89-97 is complementarity-determining-3; it reads MQRSFYPYT. The framework-4 stretch occupies residues 98–107; the sequence is FGQGTRLEVR.

The polypeptide is Ig kappa chain V region GOM (Canis lupus familiaris (Dog)).